The chain runs to 127 residues: Protein ApaG (127 aa).

Residues 3–127 (ESEKYRIEVE…FMLAMPRVLH (125 aa)) enclose the ApaG domain.

The polypeptide is Protein ApaG (Aromatoleum aromaticum (strain DSM 19018 / LMG 30748 / EbN1) (Azoarcus sp. (strain EbN1))).